A 526-amino-acid polypeptide reads, in one-letter code: Adenylyl cyclase-associated protein (526 aa).

The adenyl cyclase-binding stretch occupies residues Met-1–Ser-168. Disordered regions lie at residues Glu-43–Glu-72, Gln-255–Lys-304, and Lys-326–Arg-371. The segment covering Ser-45 to Ser-64 has biased composition (polar residues). The SH3-binding signature appears at Ala-169–Pro-369. The segment covering Ala-262–Ala-274 has biased composition (low complexity). The span at Pro-275–Pro-285 shows a compositional bias: pro residues. The segment covering Glu-290 to Ala-302 has biased composition (polar residues). A compositionally biased stretch (basic and acidic residues) spans Lys-326–Glu-338. Residues Ser-342–Ser-352 show a composition bias toward low complexity. The interval Pro-354–Pro-361 is interaction with SH3 domain of ABP1. Residues Arg-357–Pro-370 are compositionally biased toward basic residues. The C-CAP/cofactor C-like domain occupies Pro-369 to Ile-504. The dimerization and actin-binding stretch occupies residues Pro-370–Gly-526. Ser-454 bears the Phosphoserine mark.

The protein belongs to the CAP family. In terms of assembly, homodimer.

It localises to the cytoplasm. It is found in the cytoskeleton. Its subcellular location is the actin patch. The N-terminal domain binds to adenylyl cyclase, thereby enabling adenylyl cyclase to be activated by upstream regulatory signals, such as Ras. The C-terminal domain is required for normal cellular morphology and growth control. The sequence is that of Adenylyl cyclase-associated protein (SRV2) from Saccharomyces cerevisiae (strain ATCC 204508 / S288c) (Baker's yeast).